The following is a 236-amino-acid chain: Small ribosomal subunit protein uS2c (236 aa).

Belongs to the universal ribosomal protein uS2 family.

The protein localises to the plastid. It is found in the chloroplast. The chain is Small ribosomal subunit protein uS2c (rps2) from Lactuca sativa (Garden lettuce).